A 532-amino-acid polypeptide reads, in one-letter code: Putative cysteine ligase BshC (532 aa).

Residues 431–451 (MAQAKDALAKVDASLVEAAER) adopt a coiled-coil conformation.

Belongs to the BshC family.

This chain is Putative cysteine ligase BshC, found in Koribacter versatilis (strain Ellin345).